We begin with the raw amino-acid sequence, 205 residues long: Proteasome subunit beta type-3 (205 aa).

An N-acetylserine modification is found at Ser-2. Lys-77 carries the post-translational modification N6-acetyllysine.

Belongs to the peptidase T1B family. In terms of assembly, the 26S proteasome consists of a 20S proteasome core and two 19S regulatory subunits. The 20S proteasome core is a barrel-shaped complex made of 28 subunits that are arranged in four stacked rings. The two outer rings are each formed by seven alpha subunits, and the two inner rings are formed by seven beta subunits. The proteolytic activity is exerted by three beta-subunits PSMB5, PSMB6 and PSMB7. As to quaternary structure, (Microbial infection) Interacts with HIV-1 TAT protein.

It is found in the cytoplasm. The protein resides in the nucleus. Its function is as follows. Non-catalytic component of the 20S core proteasome complex involved in the proteolytic degradation of most intracellular proteins. This complex plays numerous essential roles within the cell by associating with different regulatory particles. Associated with two 19S regulatory particles, forms the 26S proteasome and thus participates in the ATP-dependent degradation of ubiquitinated proteins. The 26S proteasome plays a key role in the maintenance of protein homeostasis by removing misfolded or damaged proteins that could impair cellular functions, and by removing proteins whose functions are no longer required. Associated with the PA200 or PA28, the 20S proteasome mediates ubiquitin-independent protein degradation. This type of proteolysis is required in several pathways including spermatogenesis (20S-PA200 complex) or generation of a subset of MHC class I-presented antigenic peptides (20S-PA28 complex). The sequence is that of Proteasome subunit beta type-3 from Homo sapiens (Human).